The following is a 152-amino-acid chain: Deoxyuridine 5'-triphosphate nucleotidohydrolase (152 aa).

Residues 71-73 (RSG), N84, 88-90 (LID), and M98 contribute to the substrate site.

It belongs to the dUTPase family. The cofactor is Mg(2+).

The catalysed reaction is dUTP + H2O = dUMP + diphosphate + H(+). It participates in pyrimidine metabolism; dUMP biosynthesis; dUMP from dCTP (dUTP route): step 2/2. Functionally, this enzyme is involved in nucleotide metabolism: it produces dUMP, the immediate precursor of thymidine nucleotides and it decreases the intracellular concentration of dUTP so that uracil cannot be incorporated into DNA. This is Deoxyuridine 5'-triphosphate nucleotidohydrolase from Shewanella halifaxensis (strain HAW-EB4).